The following is a 282-amino-acid chain: Farnesyl diphosphate synthase (282 aa).

The isopentenyl diphosphate site is built by Lys45, Arg48, and His77. 2 residues coordinate Mg(2+): Asp84 and Asp90. Arg95 serves as a coordination point for (2E)-geranyl diphosphate. Arg96 contacts isopentenyl diphosphate. The (2E)-geranyl diphosphate site is built by Lys181, Thr182, and Gln220.

Belongs to the FPP/GGPP synthase family. Requires Mg(2+) as cofactor.

It localises to the cytoplasm. The catalysed reaction is isopentenyl diphosphate + (2E)-geranyl diphosphate = (2E,6E)-farnesyl diphosphate + diphosphate. This is Farnesyl diphosphate synthase (ispA) from Buchnera aphidicola subsp. Acyrthosiphon pisum (strain APS) (Acyrthosiphon pisum symbiotic bacterium).